A 323-amino-acid polypeptide reads, in one-letter code: Transcription factor LUX (323 aa).

Disordered regions lie at residues 1–25, 53–139, and 267–298; these read MGEEVQMSDYDVSGDGDRVSEWEMG, ERSR…DLSG, and GYHHQNHNHDPYHQNHRHHHGAGGNGAFESNP. Residues 65-87 are compositionally biased toward low complexity; the sequence is SETTLSSLRGGSSGPNTSSSNNN. A DNA-binding region (myb-like GARP) is located at residues 139 to 200; it reads GKTLKRPRLV…HLQKYRLYLK (62 aa).

Interacts with ELF3 and forms a complex with ELF3 and ELF4.

The protein resides in the nucleus. In terms of biological role, transcription factor that is essential for the generation of the circadian clock oscillation. Is necessary for activation of CCA1 and LHY expression. Is coregulated with TOC1 and seems to be repressed by CCA1 and LHY by direct binding of these proteins to the evening element in the LUX promoter. Directly regulates the expression of PRR9, a major component of the morning transcriptional feedback circuit, by binding specific sites on PRR9 promoter. Binds to its own promoter, inducing a negative auto-regulatory feedback loop within the core clock. Binds to ELF3 and associates with ELF4 in a diurnal complex which is required for the expression of the growth-promoting transcription factors PIF4 and PIF5 and subsequent hypocotyl growth in the early evening. This is Transcription factor LUX (LUX) from Arabidopsis thaliana (Mouse-ear cress).